The chain runs to 209 residues: Probable GTP-binding protein EngB (209 aa).

The 175-residue stretch at 24–198 (EGMEVAFAGR…HGILDQWLGL (175 aa)) folds into the EngB-type G domain. Residues 32–39 (GRSNAGKS), 59–63 (GRTQL), 77–80 (DLPG), 144–147 (TKAD), and 177–179 (FSA) each bind GTP. Residues Ser-39 and Thr-61 each coordinate Mg(2+).

It belongs to the TRAFAC class TrmE-Era-EngA-EngB-Septin-like GTPase superfamily. EngB GTPase family. The cofactor is Mg(2+).

Necessary for normal cell division and for the maintenance of normal septation. The sequence is that of Probable GTP-binding protein EngB from Thioalkalivibrio sulfidiphilus (strain HL-EbGR7).